The following is a 245-amino-acid chain: 5-oxoprolinase subunit A (245 aa).

It belongs to the LamB/PxpA family. As to quaternary structure, forms a complex composed of PxpA, PxpB and PxpC.

It carries out the reaction 5-oxo-L-proline + ATP + 2 H2O = L-glutamate + ADP + phosphate + H(+). Its function is as follows. Catalyzes the cleavage of 5-oxoproline to form L-glutamate coupled to the hydrolysis of ATP to ADP and inorganic phosphate. This chain is 5-oxoprolinase subunit A, found in Haemophilus influenzae (strain PittGG).